Here is a 90-residue protein sequence, read N- to C-terminus: Cluster 41 protein AFLA_114800 (90 aa).

The helical transmembrane segment at glycine 55–valine 77 threads the bilayer. A glycan (N-linked (GlcNAc...) asparagine) is linked at asparagine 80.

The protein resides in the membrane. In terms of biological role, cluster 41 protein; part of the gene cluster 41 that mediates the biosynthesis of an extracellular and diffusible metabolite that is able to stimulate colony sclerotial production. The chain is Cluster 41 protein AFLA_114800 from Aspergillus flavus (strain ATCC 200026 / FGSC A1120 / IAM 13836 / NRRL 3357 / JCM 12722 / SRRC 167).